Consider the following 310-residue polypeptide: N-acetyl-gamma-glutamyl-phosphate reductase (310 aa).

The active site involves Cys117.

It belongs to the NAGSA dehydrogenase family. Type 2 subfamily.

It is found in the cytoplasm. The enzyme catalyses N-acetyl-L-glutamate 5-semialdehyde + phosphate + NADP(+) = N-acetyl-L-glutamyl 5-phosphate + NADPH + H(+). Its pathway is amino-acid biosynthesis; L-arginine biosynthesis; N(2)-acetyl-L-ornithine from L-glutamate: step 3/4. In terms of biological role, catalyzes the NADPH-dependent reduction of N-acetyl-5-glutamyl phosphate to yield N-acetyl-L-glutamate 5-semialdehyde. The chain is N-acetyl-gamma-glutamyl-phosphate reductase from Rhizobium etli (strain CIAT 652).